The chain runs to 562 residues: Urease subunit alpha (562 aa).

Residues 131–562 (GGMDCHIHFI…LPMAQRYFLF (432 aa)) enclose the Urease domain. Positions 136, 138, and 219 each coordinate Ni(2+). Residue Lys219 is modified to N6-carboxylysine. His221 lines the substrate pocket. His248 and His274 together coordinate Ni(2+). His322 serves as the catalytic Proton donor. Asp362 lines the Ni(2+) pocket.

The protein belongs to the metallo-dependent hydrolases superfamily. Urease alpha subunit family. Heterotrimer of UreA (gamma), UreB (beta) and UreC (alpha) subunits. Three heterotrimers associate to form the active enzyme. It depends on Ni cation as a cofactor. Post-translationally, carboxylation allows a single lysine to coordinate two nickel ions.

The protein resides in the cytoplasm. The catalysed reaction is urea + 2 H2O + H(+) = hydrogencarbonate + 2 NH4(+). Its pathway is nitrogen metabolism; urea degradation; CO(2) and NH(3) from urea (urease route): step 1/1. In Paracoccus denitrificans (strain Pd 1222), this protein is Urease subunit alpha.